Reading from the N-terminus, the 277-residue chain is Glutamate racemase (277 aa).

Residues 13–14 and 45–46 each bind substrate; these read DS and YG. C77 (proton donor/acceptor) is an active-site residue. A substrate-binding site is contributed by 78-79; the sequence is NT. The active-site Proton donor/acceptor is the C192. Residue 193–194 participates in substrate binding; it reads TH.

It belongs to the aspartate/glutamate racemases family.

It carries out the reaction L-glutamate = D-glutamate. Its pathway is cell wall biogenesis; peptidoglycan biosynthesis. Functionally, provides the (R)-glutamate required for cell wall biosynthesis. The sequence is that of Glutamate racemase from Rhizobium meliloti (strain 1021) (Ensifer meliloti).